We begin with the raw amino-acid sequence, 458 residues long: UDP-N-acetylmuramate--L-alanine ligase (458 aa).

119-125 (GTHGKTT) provides a ligand contact to ATP.

The protein belongs to the MurCDEF family.

The protein localises to the cytoplasm. The catalysed reaction is UDP-N-acetyl-alpha-D-muramate + L-alanine + ATP = UDP-N-acetyl-alpha-D-muramoyl-L-alanine + ADP + phosphate + H(+). The protein operates within cell wall biogenesis; peptidoglycan biosynthesis. In terms of biological role, cell wall formation. The chain is UDP-N-acetylmuramate--L-alanine ligase from Phocaeicola vulgatus (strain ATCC 8482 / DSM 1447 / JCM 5826 / CCUG 4940 / NBRC 14291 / NCTC 11154) (Bacteroides vulgatus).